We begin with the raw amino-acid sequence, 292 residues long: tRNA dimethylallyltransferase (292 aa).

Position 5 to 12 (5 to 12 (APTGAGKT)) interacts with ATP. 7-12 (TGAGKT) is a binding site for substrate. Positions 29-32 (DSRQ) are interaction with substrate tRNA.

This sequence belongs to the IPP transferase family. Monomer. The cofactor is Mg(2+).

The catalysed reaction is adenosine(37) in tRNA + dimethylallyl diphosphate = N(6)-dimethylallyladenosine(37) in tRNA + diphosphate. Its function is as follows. Catalyzes the transfer of a dimethylallyl group onto the adenine at position 37 in tRNAs that read codons beginning with uridine, leading to the formation of N6-(dimethylallyl)adenosine (i(6)A). The chain is tRNA dimethylallyltransferase from Leptospira borgpetersenii serovar Hardjo-bovis (strain JB197).